A 397-amino-acid chain; its full sequence is CCA-adding enzyme (397 aa).

Gly32 and Arg35 together coordinate ATP. CTP contacts are provided by Gly32 and Arg35. Positions 45 and 47 each coordinate Mg(2+). Arg116, Asp159, Arg162, Arg165, and Arg168 together coordinate ATP. CTP-binding residues include Arg116, Asp159, Arg162, Arg165, and Arg168.

The protein belongs to the tRNA nucleotidyltransferase/poly(A) polymerase family. Bacterial CCA-adding enzyme type 3 subfamily. Homodimer. The cofactor is Mg(2+).

The catalysed reaction is a tRNA precursor + 2 CTP + ATP = a tRNA with a 3' CCA end + 3 diphosphate. It carries out the reaction a tRNA with a 3' CCA end + 2 CTP + ATP = a tRNA with a 3' CCACCA end + 3 diphosphate. Functionally, catalyzes the addition and repair of the essential 3'-terminal CCA sequence in tRNAs without using a nucleic acid template. Adds these three nucleotides in the order of C, C, and A to the tRNA nucleotide-73, using CTP and ATP as substrates and producing inorganic pyrophosphate. tRNA 3'-terminal CCA addition is required both for tRNA processing and repair. Also involved in tRNA surveillance by mediating tandem CCA addition to generate a CCACCA at the 3' terminus of unstable tRNAs. While stable tRNAs receive only 3'-terminal CCA, unstable tRNAs are marked with CCACCA and rapidly degraded. This is CCA-adding enzyme from Latilactobacillus sakei subsp. sakei (strain 23K) (Lactobacillus sakei subsp. sakei).